Reading from the N-terminus, the 679-residue chain is ATP-dependent zinc metalloprotease FtsH (679 aa).

Topologically, residues Met1–Arg6 are cytoplasmic. Residues Asn7–Ser27 form a helical membrane-spanning segment. The Extracellular segment spans residues Asp28–Trp114. A helical membrane pass occupies residues Val115–Leu135. The Cytoplasmic segment spans residues Ser136–Glu679. ATP is bound at residue Gly206–Thr213. Position 428 (His428) interacts with Zn(2+). The active site involves Glu429. His432 and Asp504 together coordinate Zn(2+). Composition is skewed to basic and acidic residues over residues Leu621–Thr642 and Pro658–Glu679. The segment at Leu621 to Glu679 is disordered.

In the central section; belongs to the AAA ATPase family. It in the C-terminal section; belongs to the peptidase M41 family. Homohexamer. It depends on Zn(2+) as a cofactor.

It is found in the cell membrane. Its function is as follows. Acts as a processive, ATP-dependent zinc metallopeptidase for both cytoplasmic and membrane proteins. Plays a role in the quality control of integral membrane proteins. The sequence is that of ATP-dependent zinc metalloprotease FtsH from Alkalihalophilus pseudofirmus (strain ATCC BAA-2126 / JCM 17055 / OF4) (Bacillus pseudofirmus).